The primary structure comprises 388 residues: Chaperone protein DnaJ (388 aa).

Residues 5-70 enclose the J domain; it reads DYYTTLNISN…KKRNLYDQYG (66 aa). The CR-type zinc-finger motif lies at 135–213; it reads GIKKEIRIPK…CFGQGRIKKS (79 aa). Cys-148, Cys-151, Cys-165, Cys-168, Cys-187, Cys-190, Cys-201, and Cys-204 together coordinate Zn(2+). CXXCXGXG motif repeat units lie at residues 148-155, 165-172, 187-194, and 201-208; these read CQSCYGYG, CTSCNGHG, CSTCRGTG, and CKICFGQG.

This sequence belongs to the DnaJ family. In terms of assembly, homodimer. Zn(2+) serves as cofactor.

The protein localises to the cytoplasm. Functionally, participates actively in the response to hyperosmotic and heat shock by preventing the aggregation of stress-denatured proteins and by disaggregating proteins, also in an autonomous, DnaK-independent fashion. Unfolded proteins bind initially to DnaJ; upon interaction with the DnaJ-bound protein, DnaK hydrolyzes its bound ATP, resulting in the formation of a stable complex. GrpE releases ADP from DnaK; ATP binding to DnaK triggers the release of the substrate protein, thus completing the reaction cycle. Several rounds of ATP-dependent interactions between DnaJ, DnaK and GrpE are required for fully efficient folding. Also involved, together with DnaK and GrpE, in the DNA replication of plasmids through activation of initiation proteins. The sequence is that of Chaperone protein DnaJ from Buchnera aphidicola subsp. Cinara cedri (strain Cc).